A 143-amino-acid polypeptide reads, in one-letter code: Snake venom vascular endothelial growth factor toxin (143 aa).

The first 24 residues, 1-24 (MAAYLLAVAILFCIQGWPSATVQG), serve as a signal peptide directing secretion. A Pyrrolidone carboxylic acid modification is found at glutamine 25. Cystine bridges form between cysteine 38–cysteine 80, cysteine 69–cysteine 115, and cysteine 73–cysteine 117. Residues 115–143 (CECRPRSPGDVNNGRNPEEGEPRARFPFV) form a disordered region. Over residues 130–143 (NPEEGEPRARFPFV) the composition is skewed to basic and acidic residues.

The protein belongs to the PDGF/VEGF growth factor family. Snake venom VEGF subfamily. As to quaternary structure, homodimer; disulfide-linked. Interacts with VEGF receptor-2 (KDR). In terms of processing, the N-terminus is blocked for N-terminal sequencing, suggesting a Pyrrolidone carboxylic acid at Gln-25. Expressed by the venom gland.

It is found in the secreted. In terms of biological role, snake venom VEGFs that may contribute to venom dispersion and prey subjugation by inducing vascular permeability and hypotension. This protein induces an increase in capillary permeability when intradermally injected into mice. Also provokes a drastic hypotensive effect after intravenous injection. The hypotension is mediated by nitric oxide (NO), which is produced by VEGF-activated endothelium NO synthase. Also induces angiogenesis in vitro. Unlike other crotalid VEGFs, this protein interacts with VEGF receptor-2 (KDR) with a high affinity (Kd=413 pM), whereas no interaction is detected with VEGF receptor-1 (FLT1). In Protobothrops jerdonii (Jerdon's pitviper), this protein is Snake venom vascular endothelial growth factor toxin.